Consider the following 207-residue polypeptide: Holliday junction branch migration complex subunit RuvA (207 aa).

Residues 1–63 are domain I; that stretch reads MISSLRGTVL…EDSLQLFGFS (63 aa). The domain II stretch occupies residues 64–142; the sequence is GLEQLQVFEL…ACRRPSAPSA (79 aa). A flexible linker region spans residues 142–146; it reads ARRPS. The interval 147-207 is domain III; the sequence is APSSVSDSVL…RLGPANQAAR (61 aa).

The protein belongs to the RuvA family. In terms of assembly, homotetramer. Forms an RuvA(8)-RuvB(12)-Holliday junction (HJ) complex. HJ DNA is sandwiched between 2 RuvA tetramers; dsDNA enters through RuvA and exits via RuvB. An RuvB hexamer assembles on each DNA strand where it exits the tetramer. Each RuvB hexamer is contacted by two RuvA subunits (via domain III) on 2 adjacent RuvB subunits; this complex drives branch migration. In the full resolvosome a probable DNA-RuvA(4)-RuvB(12)-RuvC(2) complex forms which resolves the HJ.

It localises to the cytoplasm. The RuvA-RuvB-RuvC complex processes Holliday junction (HJ) DNA during genetic recombination and DNA repair, while the RuvA-RuvB complex plays an important role in the rescue of blocked DNA replication forks via replication fork reversal (RFR). RuvA specifically binds to HJ cruciform DNA, conferring on it an open structure. The RuvB hexamer acts as an ATP-dependent pump, pulling dsDNA into and through the RuvAB complex. HJ branch migration allows RuvC to scan DNA until it finds its consensus sequence, where it cleaves and resolves the cruciform DNA. The sequence is that of Holliday junction branch migration complex subunit RuvA from Leifsonia xyli subsp. xyli (strain CTCB07).